A 253-amino-acid polypeptide reads, in one-letter code: Sulfate transporter CysZ (253 aa).

Transmembrane regions (helical) follow at residues 31-51 (FVIL…WWLF), 75-95 (LLWP…FSTI), 151-171 (IVLL…PVLW), and 222-242 (IPLL…AMWV).

The protein belongs to the CysZ family.

The protein resides in the cell inner membrane. High affinity, high specificity proton-dependent sulfate transporter, which mediates sulfate uptake. Provides the sulfur source for the cysteine synthesis pathway. This chain is Sulfate transporter CysZ, found in Escherichia coli (strain 55989 / EAEC).